Reading from the N-terminus, the 832-residue chain is G-type lectin S-receptor-like serine/threonine-protein kinase RLK1 (832 aa).

Positions 1-24 are cleaved as a signal peptide; the sequence is MGSLSCSIIHLVLILQLQTFFVFS. Residues 25–461 lie on the Extracellular side of the membrane; it reads QNIRNGSVPV…VPVTGNRAKK (437 aa). Residues N29, N92, N100, N178, N240, and N251 are each glycosylated (N-linked (GlcNAc...) asparagine). Residues 37-157 form the Bulb-type lectin domain; it reads SLTASESQQI…GSEDSDEVLW (121 aa). The EGF-like; atypical domain maps to 299-349; the sequence is RDNMCSPDDALGNMACGYNNICSLGNNKRPKCECPERFVLKDPSNEYGDCL. Disulfide bonds link C303-C320, C314-C330, and C332-C348. One can recognise a PAN domain in the interval 357–446; that stretch reads CRPENQTANS…DSDTFIKVRN (90 aa). N361 carries N-linked (GlcNAc...) asparagine glycosylation. 2 disulfides stabilise this stretch: C397-C420 and C401-C407. N-linked (GlcNAc...) asparagine glycosylation occurs at N446. The helical transmembrane segment at 462 to 482 threads the bilayer; the sequence is LDWLIIACSVLLGTSAFVIFD. The Cytoplasmic segment spans residues 483–832; the sequence is TSCSYRKTKK…SLSSDPVSLV (350 aa). A Protein kinase domain is found at 531-803; the sequence is RDFTEELGRG…NVTQMLEGVI (273 aa). ATP contacts are provided by residues 537-545 and K563; that span reads LGRGAFGIV. Residues 622-638 form a caM-binding region; sequence RRPRPSWEDRKNIAVAI. Catalysis depends on D657, which acts as the Proton acceptor.

Belongs to the protein kinase superfamily. Ser/Thr protein kinase family.

The protein resides in the cell membrane. The enzyme catalyses L-seryl-[protein] + ATP = O-phospho-L-seryl-[protein] + ADP + H(+). It carries out the reaction L-threonyl-[protein] + ATP = O-phospho-L-threonyl-[protein] + ADP + H(+). The protein is G-type lectin S-receptor-like serine/threonine-protein kinase RLK1 (RLK1) of Arabidopsis thaliana (Mouse-ear cress).